Consider the following 701-residue polypeptide: Polyribonucleotide nucleotidyltransferase (701 aa).

Mg(2+)-binding residues include Asp-487 and Asp-493. A KH domain is found at 554–613; that stretch reads PTMIAMKIDTDKIRDVIGKGGATIRAICEETKASIDIEDDGSIKIFGETKEAADAAKQRI. The S1 motif domain occupies 623 to 691; sequence GKIYVGKVER…NRGRIKLSIK (69 aa).

It belongs to the polyribonucleotide nucleotidyltransferase family. Component of the RNA degradosome, which is a multiprotein complex involved in RNA processing and mRNA degradation. Mg(2+) serves as cofactor.

The protein localises to the cytoplasm. It carries out the reaction RNA(n+1) + phosphate = RNA(n) + a ribonucleoside 5'-diphosphate. Its function is as follows. Involved in mRNA degradation. Catalyzes the phosphorolysis of single-stranded polyribonucleotides processively in the 3'- to 5'-direction. The polypeptide is Polyribonucleotide nucleotidyltransferase (Pseudomonas entomophila (strain L48)).